A 636-amino-acid chain; its full sequence is MELKTMPQNGANNGNPQGNTSNNNNTNDSSNSNSNNNNKTERTNWSNGLEFLMSCISVSVGLGNIWRFPFTAYENGGGAFLIPYIIVLFMIGKPMYYLEMIMGQFTSQGTVKIWSICPSFLGVGYGQAFGTICIISYYSSLLALTLYYLAVSFQADLPWSTCRDTWINCVNSRPAEYIETMMTNGSSALTRATDTPAKLQSSSELYFLDVVINEKTDISDGVGNPDWKLTIALFVSWIVIFLVIMRGVKSSGKAAYFLALFPYVVLFTLLGRAVTLEGAVDGIIFFLEPQWGELLNPTVWKEAVVQCFFSLAVGSGPIIMFSSYNRFDHPIYRDAMIVTTLDTLTSLLGGITIFAILGNLAHNLKVENIRDVVRSGTGLAFISYPDAISKFNAVPQLFSALFFFMLFVLGIGSIVALQSTIVTIICDQFKWKYWKVALVTSICGFLMGLVYVTPGGQWILTLVDFYGGTYVVFILAIFELVGIAWIYGVSNFCDDIEFMSNKRVSLYWRACWLIFTPIMMIVIFIYSMVTITPIKYSDIYFPVAGDVAGWLLFAIGASQFPLWGWWYVHNHRTGSIAKSFVDSLKPSQKWGPADPETRRNWLLFKSDLAAKRAVQAKSDKMGFFRQKLYNMCGRST.

Positions methionine 1 to threonine 40 are disordered. Topologically, residues methionine 1–glutamate 50 are cytoplasmic. Over residues proline 7–threonine 40 the composition is skewed to low complexity. 3 helical membrane passes run phenylalanine 51 to threonine 71, glycine 78 to leucine 98, and threonine 131 to valine 151. N-linked (GlcNAc...) asparagine glycosylation occurs at asparagine 184. The next 9 helical transmembrane spans lie at proline 225 to methionine 245, alanine 254 to valine 274, alanine 303 to serine 323, isoleucine 337 to leucine 357, leucine 397 to leucine 417, valine 436 to glycine 456, threonine 469 to valine 489, cysteine 511 to isoleucine 531, and valine 547 to tyrosine 567.

The protein belongs to the sodium:neurotransmitter symporter (SNF) (TC 2.A.22) family.

It localises to the membrane. In terms of biological role, unusual broad substrate spectrum amino acid:sodium cotransporter that promotes absorption of the D isomers of essential amino acids. Neutral amino acids are the preferred substrates, especially methionine and phenylalanine. In Drosophila grimshawi (Hawaiian fruit fly), this protein is Sodium-dependent nutrient amino acid transporter 1.